We begin with the raw amino-acid sequence, 145 residues long: Procyclic form-specific polypeptide B-alpha (145 aa).

The N-terminal stretch at 1–27 is a signal peptide; the sequence is MAPRSLYLLAVLLFSANLFAGVGFAAA. The segment at 28-127 is disordered; it reads AEGPEDKGLT…PEPEPGAATL (100 aa). The segment covering 31–52 has biased composition (basic and acidic residues); sequence PEDKGLTKGGKGKGEKGTKVGA. 32 repeat units span residues 59 to 60, 61 to 62, 63 to 64, 65 to 66, 67 to 68, 69 to 70, 71 to 72, 73 to 74, 75 to 76, 77 to 78, 79 to 80, 81 to 82, 83 to 84, 85 to 86, 87 to 88, 89 to 90, 91 to 92, 93 to 94, 95 to 96, 97 to 98, 99 to 100, 101 to 102, 103 to 104, 105 to 106, 107 to 108, 109 to 110, 111 to 112, 113 to 114, 115 to 116, 117 to 118, 119 to 120, and 121 to 122. Residues 59–122 are 32 X 2 AA tandem repeats of [DE]-P; that stretch reads DPDPEPEPEP…EPEPEPEPEP (64 aa). The segment covering 60-120 has biased composition (acidic residues); that stretch reads PDPEPEPEPE…EPEPEPEPEP (61 aa). G123 carries the GPI-anchor amidated glycine lipid modification. Positions 124-145 are excised as a propeptide; the sequence is AATLKSVALPFAIAAAALVAAF.

It is found in the cell membrane. Its function is as follows. Major surface antigen of procyclic forms. The chain is Procyclic form-specific polypeptide B-alpha (PARPB) from Trypanosoma brucei brucei.